A 603-amino-acid polypeptide reads, in one-letter code: Probable methyltransferase PMT20 (603 aa).

Residues 1 to 16 (MKSGKQSSQPEKGTSR) lie on the Cytoplasmic side of the membrane. Residues 17-37 (ILSLTVLFIAFCGFSFYLGGI) traverse the membrane as a helical; Signal-anchor for type II membrane protein segment. Over 38–603 (FCSERDKIVA…KLWFSSNQTS (566 aa)) the chain is Lumenal. N-linked (GlcNAc...) asparagine glycans are attached at residues N313 and N600.

Belongs to the methyltransferase superfamily.

The protein resides in the golgi apparatus membrane. This is Probable methyltransferase PMT20 from Arabidopsis thaliana (Mouse-ear cress).